A 156-amino-acid polypeptide reads, in one-letter code: Small ribosomal subunit protein bS16 (156 aa).

Residues 124-135 are compositionally biased toward low complexity; the sequence is AAKAAEAETPAE. The tract at residues 124–156 is disordered; sequence AAKAAEAETPAEVQHDDEKVELADVEESAPESV. The segment covering 136-145 has biased composition (basic and acidic residues); it reads VQHDDEKVEL. Acidic residues predominate over residues 146-156; sequence ADVEESAPESV.

Belongs to the bacterial ribosomal protein bS16 family.

The polypeptide is Small ribosomal subunit protein bS16 (Bifidobacterium animalis subsp. lactis (strain AD011)).